A 205-amino-acid chain; its full sequence is ATP phosphoribosyltransferase (205 aa).

Belongs to the ATP phosphoribosyltransferase family. Short subfamily.

It is found in the cytoplasm. The enzyme catalyses 1-(5-phospho-beta-D-ribosyl)-ATP + diphosphate = 5-phospho-alpha-D-ribose 1-diphosphate + ATP. It participates in amino-acid biosynthesis; L-histidine biosynthesis; L-histidine from 5-phospho-alpha-D-ribose 1-diphosphate: step 1/9. Catalyzes the condensation of ATP and 5-phosphoribose 1-diphosphate to form N'-(5'-phosphoribosyl)-ATP (PR-ATP). Has a crucial role in the pathway because the rate of histidine biosynthesis seems to be controlled primarily by regulation of HisG enzymatic activity. The protein is ATP phosphoribosyltransferase of Thermococcus gammatolerans (strain DSM 15229 / JCM 11827 / EJ3).